A 55-amino-acid polypeptide reads, in one-letter code: Large ribosomal subunit protein bL33 (55 aa).

It belongs to the bacterial ribosomal protein bL33 family.

This Bartonella bacilliformis (strain ATCC 35685 / KC583 / Herrer 020/F12,63) protein is Large ribosomal subunit protein bL33.